The chain runs to 153 residues: Large ribosomal subunit protein uL13 (153 aa).

This sequence belongs to the universal ribosomal protein uL13 family. As to quaternary structure, part of the 50S ribosomal subunit.

In terms of biological role, this protein is one of the early assembly proteins of the 50S ribosomal subunit, although it is not seen to bind rRNA by itself. It is important during the early stages of 50S assembly. The protein is Large ribosomal subunit protein uL13 of Azorhizobium caulinodans (strain ATCC 43989 / DSM 5975 / JCM 20966 / LMG 6465 / NBRC 14845 / NCIMB 13405 / ORS 571).